Consider the following 368-residue polypeptide: tRNA 2-selenouridine synthase (368 aa).

Positions 15-138 (FLNQHPIMDV…LRQYLIGVIE (124 aa)) constitute a Rhodanese domain. Residue Cys-98 is the S-selanylcysteine intermediate of the active site.

Belongs to the SelU family. As to quaternary structure, monomer.

It carries out the reaction 5-methylaminomethyl-2-thiouridine(34) in tRNA + selenophosphate + (2E)-geranyl diphosphate + H2O + H(+) = 5-methylaminomethyl-2-selenouridine(34) in tRNA + (2E)-thiogeraniol + phosphate + diphosphate. It catalyses the reaction 5-methylaminomethyl-2-thiouridine(34) in tRNA + (2E)-geranyl diphosphate = 5-methylaminomethyl-S-(2E)-geranyl-thiouridine(34) in tRNA + diphosphate. The enzyme catalyses 5-methylaminomethyl-S-(2E)-geranyl-thiouridine(34) in tRNA + selenophosphate + H(+) = 5-methylaminomethyl-2-(Se-phospho)selenouridine(34) in tRNA + (2E)-thiogeraniol. The catalysed reaction is 5-methylaminomethyl-2-(Se-phospho)selenouridine(34) in tRNA + H2O = 5-methylaminomethyl-2-selenouridine(34) in tRNA + phosphate. Its function is as follows. Involved in the post-transcriptional modification of the uridine at the wobble position (U34) of tRNA(Lys), tRNA(Glu) and tRNA(Gln). Catalyzes the conversion of 2-thiouridine (S2U-RNA) to 2-selenouridine (Se2U-RNA). Acts in a two-step process involving geranylation of 2-thiouridine (S2U) to S-geranyl-2-thiouridine (geS2U) and subsequent selenation of the latter derivative to 2-selenouridine (Se2U) in the tRNA chain. The polypeptide is tRNA 2-selenouridine synthase (Shewanella baltica (strain OS223)).